The sequence spans 481 residues: Serine--tRNA ligase (481 aa).

Position 284-286 (Thr-284–Glu-286) interacts with L-serine. Residue Arg-315–Glu-317 participates in ATP binding. An L-serine-binding site is contributed by Glu-338. An ATP-binding site is contributed by Glu-405 to Ser-408. Ser-440 provides a ligand contact to L-serine.

This sequence belongs to the class-II aminoacyl-tRNA synthetase family. Type-1 seryl-tRNA synthetase subfamily. In terms of assembly, homodimer. The tRNA molecule binds across the dimer.

It localises to the cytoplasm. The catalysed reaction is tRNA(Ser) + L-serine + ATP = L-seryl-tRNA(Ser) + AMP + diphosphate + H(+). It catalyses the reaction tRNA(Sec) + L-serine + ATP = L-seryl-tRNA(Sec) + AMP + diphosphate + H(+). It participates in aminoacyl-tRNA biosynthesis; selenocysteinyl-tRNA(Sec) biosynthesis; L-seryl-tRNA(Sec) from L-serine and tRNA(Sec): step 1/1. In terms of biological role, catalyzes the attachment of serine to tRNA(Ser). Is also able to aminoacylate tRNA(Sec) with serine, to form the misacylated tRNA L-seryl-tRNA(Sec), which will be further converted into selenocysteinyl-tRNA(Sec). This chain is Serine--tRNA ligase, found in Rhodopseudomonas palustris (strain BisB18).